The following is a 118-amino-acid chain: Small ribosomal subunit protein uS13 (118 aa).

The segment at 94 to 118 (GLPVRGQRTKTNARTRKGPRKPIKK) is disordered.

The protein belongs to the universal ribosomal protein uS13 family. As to quaternary structure, part of the 30S ribosomal subunit. Forms a loose heterodimer with protein S19. Forms two bridges to the 50S subunit in the 70S ribosome.

In terms of biological role, located at the top of the head of the 30S subunit, it contacts several helices of the 16S rRNA. In the 70S ribosome it contacts the 23S rRNA (bridge B1a) and protein L5 of the 50S subunit (bridge B1b), connecting the 2 subunits; these bridges are implicated in subunit movement. Contacts the tRNAs in the A and P-sites. The chain is Small ribosomal subunit protein uS13 from Histophilus somni (strain 129Pt) (Haemophilus somnus).